The following is a 403-amino-acid chain: Probable tubulin--tyrosine ligase C12B10.04 (403 aa).

In terms of domain architecture, TTL spans 9–386; the sequence is KVYVNYRDEY…PFFESSTKRN (378 aa).

Belongs to the tubulin--tyrosine ligase family. It depends on Mg(2+) as a cofactor. K(+) serves as cofactor.

The protein localises to the cytoplasm. The protein resides in the nucleus. It carries out the reaction C-terminal L-alpha-aminoacyl-L-glutamyl-L-glutamyl-[tubulin] + L-tyrosine + ATP = C-terminal L-alpha-aminoacyl-L-glutamyl-L-glutamyl-L-tyrosyl-[tubulin] + ADP + phosphate + H(+). In terms of biological role, probable tubulin--tyrosine ligase. This Schizosaccharomyces pombe (strain 972 / ATCC 24843) (Fission yeast) protein is Probable tubulin--tyrosine ligase C12B10.04.